A 264-amino-acid chain; its full sequence is MYQYLDLMRHVLQYGHKKSDRTGTGTLSVFGYQMRFDLQTGFPLVTTKKCHVKSIIHELLWFLRGETNIDYLKRNGVSIWDEWADENGDLGPIYGHQWRSWAASDGTVIDQISQVIQQIKETPDSRRMIVSAWNVGDLDKMKLAPCHVLFQFYVADGRLSCQLYQRSADIFLGVPFNIASYSLLTLMIAQCCDLQPGEFVHTFGDAHLYLNHLEQARLQLEREPRALPAMQLNSTVRNIFDFGYEDFTLHDYDPYPPIKAPVAV.

R21 lines the dUMP pocket. H51 lines the (6R)-5,10-methylene-5,6,7,8-tetrahydrofolate pocket. R126 to R127 provides a ligand contact to dUMP. Catalysis depends on C146, which acts as the Nucleophile. DUMP contacts are provided by residues R166–D169, N177, and H207–Y209. Residue D169 coordinates (6R)-5,10-methylene-5,6,7,8-tetrahydrofolate. A263 is a (6R)-5,10-methylene-5,6,7,8-tetrahydrofolate binding site.

Belongs to the thymidylate synthase family. Bacterial-type ThyA subfamily. As to quaternary structure, homodimer.

The protein localises to the cytoplasm. It carries out the reaction dUMP + (6R)-5,10-methylene-5,6,7,8-tetrahydrofolate = 7,8-dihydrofolate + dTMP. It participates in pyrimidine metabolism; dTTP biosynthesis. Catalyzes the reductive methylation of 2'-deoxyuridine-5'-monophosphate (dUMP) to 2'-deoxythymidine-5'-monophosphate (dTMP) while utilizing 5,10-methylenetetrahydrofolate (mTHF) as the methyl donor and reductant in the reaction, yielding dihydrofolate (DHF) as a by-product. This enzymatic reaction provides an intracellular de novo source of dTMP, an essential precursor for DNA biosynthesis. This chain is Thymidylate synthase, found in Nitrosomonas europaea (strain ATCC 19718 / CIP 103999 / KCTC 2705 / NBRC 14298).